The chain runs to 393 residues: Cysteine protease ATG4B (393 aa).

Position 1 is an N-acetylmethionine (M1). S34 carries the phosphoserine modification. C74 acts as the Nucleophile in catalysis. At C189 the chain carries S-nitrosocysteine. Active-site residues include D278 and H280. 2 positions are modified to S-nitrosocysteine: C292 and C301. The cysteines at positions 292 and 361 are disulfide-linked. Residues S316 and S383 each carry the phosphoserine modification. Residues 388–391 carry the LIR motif; that stretch reads FEIL. Position 392 is a phosphoserine (S392).

Belongs to the peptidase C54 family. In terms of assembly, interacts with PFKP; promoting phosphorylation of ATG4B at Ser-34. Interacts with GBP7. In terms of processing, phosphorylation at Ser-383 and Ser-392 promotes autophagy by increasing protein delipidation activity without affecting proteolytic activation of ATG8 proteins. Phosphorylation at Ser-316 by ULK1 inhibits autophagy by decreasing both proteolytic activation and delipidation activities. Phosphorylation at Ser-316 is dephosphorylated by protein phosphatase 2A (PP2A). Phosphorylation at Ser-34 by AKT2 promotes its hydrolase activity, leading to increased proteolytic activation and delipidation of ATG8 family proteins. Phosphorylation at Ser-34 by AKT1 promotes mitochondrial localization and inhibition of the F1F0-ATP synthase activity, leading to elevation of mitochondrial reactive oxygen species (ROS). Ubiquitinated by RNF5, leading to its degradation by the proteasome. Post-translationally, S-nitrosylation in response to high glucose decreases both proteolytic activation and delipidation activities. In terms of processing, O-glycosylated by OGT, leading to increase protease activity, thereby promoting the proteolytic activation of ATG8 family proteins. Forms reversible intrachain disulfide bonds in response to oxidative stress. Forms interchain disulfide bonds, leading to formation of homooligomers in response to oxidation.

The protein localises to the cytoplasm. The protein resides in the cytosol. It is found in the cytoplasmic vesicle. It localises to the autophagosome. Its subcellular location is the endoplasmic reticulum. The protein localises to the mitochondrion. It carries out the reaction [protein]-C-terminal L-amino acid-glycyl-phosphatidylethanolamide + H2O = [protein]-C-terminal L-amino acid-glycine + a 1,2-diacyl-sn-glycero-3-phosphoethanolamine. It catalyses the reaction [protein]-C-terminal L-amino acid-glycyl-phosphatidylserine + H2O = [protein]-C-terminal L-amino acid-glycine + a 1,2-diacyl-sn-glycero-3-phospho-L-serine. Its activity is regulated as follows. Inhibited by N-ethylmaleimide. Redox-regulated during autophagy since reducing conditions activate ATG4A whereas an oxidizing environment such as the presence of H(2)O(2) inhibits its activity. The cysteine protease activity compounds is inhibited by styrylquinoline compounds 4-28 and LV-320. In terms of biological role, cysteine protease that plays a key role in autophagy by mediating both proteolytic activation and delipidation of ATG8 family proteins. Required for canonical autophagy (macroautophagy), non-canonical autophagy as well as for mitophagy. The protease activity is required for proteolytic activation of ATG8 family proteins: cleaves the C-terminal amino acid of ATG8 proteins MAP1LC3A, MAP1LC3B, MAP1LC3C, GABARAPL1, GABARAPL2 and GABARAP, to reveal a C-terminal glycine. Exposure of the glycine at the C-terminus is essential for ATG8 proteins conjugation to phosphatidylethanolamine (PE) and insertion to membranes, which is necessary for autophagy. Protease activity is also required to counteract formation of high-molecular weight conjugates of ATG8 proteins (ATG8ylation): acts as a deubiquitinating-like enzyme that removes ATG8 conjugated to other proteins, such as ATG3. In addition to the protease activity, also mediates delipidation of ATG8 family proteins. Catalyzes delipidation of PE-conjugated forms of ATG8 proteins during macroautophagy. Also involved in non-canonical autophagy, a parallel pathway involving conjugation of ATG8 proteins to single membranes at endolysosomal compartments, by catalyzing delipidation of ATG8 proteins conjugated to phosphatidylserine (PS). Compared to other members of the family (ATG4A, ATG4C or ATG4C), constitutes the major protein for proteolytic activation of ATG8 proteins, while it displays weaker delipidation activity than other ATG4 paralogs. Involved in phagophore growth during mitophagy independently of its protease activity and of ATG8 proteins: acts by regulating ATG9A trafficking to mitochondria and promoting phagophore-endoplasmic reticulum contacts during the lipid transfer phase of mitophagy. The protein is Cysteine protease ATG4B of Rattus norvegicus (Rat).